Here is a 489-residue protein sequence, read N- to C-terminus: Pre-glycoprotein polyprotein GP complex (489 aa).

Residue G2 is the site of N-myristoyl glycine; by host attachment. Residues 2–17 (GQIVTFFQEVPHILEE) are Extracellular-facing. The helical transmembrane segment at 18-33 (VMNIVLMTLSILAILK) threads the bilayer. At 34-58 (GIYNVMTCGIIGLITFLFLCGRSCS) the chain is on the cytoplasmic side. C57 contacts Zn(2+). Residues 59–430 (SIYKDNYEFF…QSTTPLGLVD (372 aa)) are Extracellular-facing. N-linked (GlcNAc...) asparagine; by host glycosylation is found at N78, N88, N98, N108, N118, and N166. Intrachain disulfides connect C85-C229, C117-C154, C179-C210, C277-C290, C299-C308, and C362-C383. N-linked (GlcNAc...) asparagine; by host glycosylation occurs at N222. N363, N371, N388, and N393 each carry an N-linked (GlcNAc...) asparagine; by host glycan. A helical membrane pass occupies residues 431-451 (LFVFSTSFYLISVFLHLIKIP). At 452-489 (THRHIKGKPCPKPHRLNHMAICSCGFYKQPGLPTQWKR) the chain is on the cytoplasmic side. H453, H455, C461, H465, C473, and C475 together coordinate Zn(2+).

Belongs to the arenaviridae GPC protein family. As to quaternary structure, interacts with glycoprotein G2. Part of the GP complex (GP-C) together with glycoprotein G1 and glycoprotein G2. The GP-complex interacts with protein Z, which interacts with ribonucleocapsid; these interactions may induce virion budding. Homotrimer; disulfide-linked. In pre-fusion state, G1 homotrimers bind G2 homotrimers via ionic interactions. Part of the GP complex (GP-C) together with glycoprotein G2 and the stable signal peptide. The GP-complex interacts with protein Z, which interacts with ribonucleocapsid; these interactions may induce virion budding. In terms of assembly, homotrimer. Interacts with the stable signal peptide. In pre-fusion state, G2 homotrimers bind G1 homotrimers via ionic interactions. Part of the GP complex (GP-C) together with glycoprotein G1 and the stable signal peptide. Acidification in the endosome triggers rearrangements, which ultimately leads to a 6 helix bundle formed by the two heptad repeat domains (HR1 and HR2) in post-fusion state. The GP-complex interacts with protein Z, which interacts with ribonucleocapsid; these interactions may induce virion budding. Specific enzymatic cleavages in vivo yield mature proteins. GP-C polyprotein is cleaved in the endoplasmic reticulum by the host protease MBTPS1. Only cleaved glycoprotein is incorporated into virions. In terms of processing, the SSP remains stably associated with the GP complex following cleavage by signal peptidase and plays crucial roles in the trafficking of GP through the secretory pathway. Post-translationally, myristoylation is necessary for GP2-mediated fusion activity.

The protein resides in the virion membrane. It is found in the host endoplasmic reticulum membrane. Its subcellular location is the host Golgi apparatus membrane. It localises to the host cell membrane. In terms of biological role, functions as a cleaved signal peptide that is retained as the third component of the GP complex (GP-C). Helps to stabilize the spike complex in its native conformation. The SSP is required for efficient glycoprotein expression, post-translational maturation cleavage of G1 and G2, glycoprotein transport to the cell surface plasma membrane, formation of infectious virus particles, and acid pH-dependent glycoprotein-mediated cell fusion. Forms the virion spikes together with glycoprotein G2. The glycoprotein spike trimers are connected to the underlying matrix. Interacts with the host receptor leading to virus endocytosis. Functionally, forms the virion spikes together with glycoprotein G1. The glycoprotein spike trimers are connected to the underlying matrix. Class I viral fusion protein that directs fusion of viral and host endosomal membranes, leading to delivery of the nucleocapsid into the cytoplasm. Membrane fusion is mediated by irreversible conformational changes induced by acidification. This chain is Pre-glycoprotein polyprotein GP complex, found in Mastomys natalensis (African soft-furred rat).